Here is a 284-residue protein sequence, read N- to C-terminus: Phosphoenolpyruvate guanylyltransferase (284 aa).

Positions 94–123 (ADLSADEPAGTDAERRADPSAENRASTSAQ) are disordered. Residues 105–114 (DAERRADPSA) show a composition bias toward basic and acidic residues. Phosphoenolpyruvate-binding residues include T203, G219, and S222.

This sequence belongs to the CofC family.

The enzyme catalyses phosphoenolpyruvate + GTP + H(+) = enolpyruvoyl-2-diphospho-5'-guanosine + diphosphate. It participates in cofactor biosynthesis; coenzyme F420 biosynthesis. Functionally, guanylyltransferase that catalyzes the activation of phosphoenolpyruvate (PEP) as enolpyruvoyl-2-diphospho-5'-guanosine, via the condensation of PEP with GTP. It is involved in the biosynthesis of coenzyme F420, a hydride carrier cofactor. The protein is Phosphoenolpyruvate guanylyltransferase of Sanguibacter keddieii (strain ATCC 51767 / DSM 10542 / NCFB 3025 / ST-74).